The primary structure comprises 388 residues: L-lactate dehydrogenase (388 aa).

The FMN hydroxy acid dehydrogenase domain occupies 1 to 380; the sequence is MIISAASDYR…SADALSRVTR (380 aa). Position 24 (Y24) interacts with substrate. Positions 106 and 127 each coordinate FMN. Residue Y129 participates in substrate binding. T155 is a binding site for FMN. A substrate-binding site is contributed by R164. K251 is an FMN binding site. The active-site Proton acceptor is H275. Residue R278 participates in substrate binding. Residue 306-330 coordinates FMN; sequence DSGIRSGLDVVRMLALGADAVLLGR.

Belongs to the FMN-dependent alpha-hydroxy acid dehydrogenase family. FMN is required as a cofactor.

The protein resides in the cell inner membrane. The enzyme catalyses (S)-lactate + A = pyruvate + AH2. Catalyzes the conversion of L-lactate to pyruvate. Is coupled to the respiratory chain. The chain is L-lactate dehydrogenase from Xanthomonas axonopodis pv. citri (strain 306).